Here is a 109-residue protein sequence, read N- to C-terminus: Thiosulfate sulfurtransferase GlpE (109 aa).

The 89-residue stretch at 17–105 (KEGKTALVDI…WARSYPQDIT (89 aa)) folds into the Rhodanese domain. Catalysis depends on cysteine 65, which acts as the Cysteine persulfide intermediate.

The protein belongs to the GlpE family.

The protein localises to the cytoplasm. It catalyses the reaction thiosulfate + hydrogen cyanide = thiocyanate + sulfite + 2 H(+). The catalysed reaction is thiosulfate + [thioredoxin]-dithiol = [thioredoxin]-disulfide + hydrogen sulfide + sulfite + 2 H(+). Transferase that catalyzes the transfer of sulfur from thiosulfate to thiophilic acceptors such as cyanide or dithiols. May function in a CysM-independent thiosulfate assimilation pathway by catalyzing the conversion of thiosulfate to sulfite, which can then be used for L-cysteine biosynthesis. The protein is Thiosulfate sulfurtransferase GlpE of Yersinia pestis.